Here is a 941-residue protein sequence, read N- to C-terminus: Translation initiation factor IF-2 (941 aa).

2 disordered regions span residues 61–204 (IQSN…RREN) and 249–274 (QEKDKETKKAKKSNKPKAIPAAKNNK). Residues 147–163 (EKAKQKLQEIQKSREAL) show a composition bias toward basic and acidic residues. The segment covering 164-179 (NKLTQSNTNNANNANS) has biased composition (low complexity). Basic and acidic residues predominate over residues 180 to 204 (AKKEISEVAKQEREQEHLDNKRREN). A tr-type G domain is found at 440 to 609 (ERPPVVTIMG…LIQADIMELK (170 aa)). The G1 stretch occupies residues 449–456 (GHVDHGKT). 449 to 456 (GHVDHGKT) is a binding site for GTP. A G2 region spans residues 474–478 (GITQH). The tract at residues 495 to 498 (DTPG) is G3. GTP is bound by residues 495 to 499 (DTPGH) and 549 to 552 (NKMD). The G4 stretch occupies residues 549 to 552 (NKMD). The segment at 585–587 (SAK) is G5.

Belongs to the TRAFAC class translation factor GTPase superfamily. Classic translation factor GTPase family. IF-2 subfamily.

It localises to the cytoplasm. In terms of biological role, one of the essential components for the initiation of protein synthesis. Protects formylmethionyl-tRNA from spontaneous hydrolysis and promotes its binding to the 30S ribosomal subunits. Also involved in the hydrolysis of GTP during the formation of the 70S ribosomal complex. This Helicobacter acinonychis (strain Sheeba) protein is Translation initiation factor IF-2.